A 368-amino-acid polypeptide reads, in one-letter code: Peptide chain release factor 2 (368 aa).

Gln-250 is modified (N5-methylglutamine).

Belongs to the prokaryotic/mitochondrial release factor family. In terms of processing, methylated by PrmC. Methylation increases the termination efficiency of RF2.

The protein localises to the cytoplasm. Functionally, peptide chain release factor 2 directs the termination of translation in response to the peptide chain termination codons UGA and UAA. The polypeptide is Peptide chain release factor 2 (Chlamydia abortus (strain DSM 27085 / S26/3) (Chlamydophila abortus)).